The chain runs to 607 residues: Elongation factor 4 (607 aa).

Positions 11-193 constitute a tr-type G domain; it reads KNIRNFSIIA…KIVETIPAPS (183 aa). GTP is bound by residues 23–28 and 140–143; these read DHGKST and NKID.

It belongs to the TRAFAC class translation factor GTPase superfamily. Classic translation factor GTPase family. LepA subfamily.

It localises to the cell membrane. The enzyme catalyses GTP + H2O = GDP + phosphate + H(+). In terms of biological role, required for accurate and efficient protein synthesis under certain stress conditions. May act as a fidelity factor of the translation reaction, by catalyzing a one-codon backward translocation of tRNAs on improperly translocated ribosomes. Back-translocation proceeds from a post-translocation (POST) complex to a pre-translocation (PRE) complex, thus giving elongation factor G a second chance to translocate the tRNAs correctly. Binds to ribosomes in a GTP-dependent manner. The protein is Elongation factor 4 of Staphylococcus carnosus (strain TM300).